The chain runs to 444 residues: Methylenetetrahydrofolate--tRNA-(uracil-5-)-methyltransferase TrmFO (444 aa).

9-14 (GAGMAG) is an FAD binding site.

It belongs to the MnmG family. TrmFO subfamily. FAD is required as a cofactor.

It localises to the cytoplasm. It catalyses the reaction uridine(54) in tRNA + (6R)-5,10-methylene-5,6,7,8-tetrahydrofolate + NADH + H(+) = 5-methyluridine(54) in tRNA + (6S)-5,6,7,8-tetrahydrofolate + NAD(+). The catalysed reaction is uridine(54) in tRNA + (6R)-5,10-methylene-5,6,7,8-tetrahydrofolate + NADPH + H(+) = 5-methyluridine(54) in tRNA + (6S)-5,6,7,8-tetrahydrofolate + NADP(+). In terms of biological role, catalyzes the folate-dependent formation of 5-methyl-uridine at position 54 (M-5-U54) in all tRNAs. In Cereibacter sphaeroides (strain ATCC 17023 / DSM 158 / JCM 6121 / CCUG 31486 / LMG 2827 / NBRC 12203 / NCIMB 8253 / ATH 2.4.1.) (Rhodobacter sphaeroides), this protein is Methylenetetrahydrofolate--tRNA-(uracil-5-)-methyltransferase TrmFO.